Here is a 309-residue protein sequence, read N- to C-terminus: Ribosomal RNA small subunit methyltransferase H (309 aa).

S-adenosyl-L-methionine-binding positions include 33 to 35, aspartate 53, phenylalanine 79, aspartate 100, and glutamine 107; that span reads GGH.

The protein belongs to the methyltransferase superfamily. RsmH family.

The protein resides in the cytoplasm. The enzyme catalyses cytidine(1402) in 16S rRNA + S-adenosyl-L-methionine = N(4)-methylcytidine(1402) in 16S rRNA + S-adenosyl-L-homocysteine + H(+). Functionally, specifically methylates the N4 position of cytidine in position 1402 (C1402) of 16S rRNA. This chain is Ribosomal RNA small subunit methyltransferase H, found in Clostridium kluyveri (strain NBRC 12016).